The chain runs to 246 residues: Triosephosphate isomerase (246 aa).

9–11 (NWK) contributes to the substrate binding site. Residue histidine 99 is the Electrophile of the active site. Residue glutamate 168 is the Proton acceptor of the active site. Residues glycine 174, serine 207, and 228–229 (GG) contribute to the substrate site.

The protein belongs to the triosephosphate isomerase family. Homodimer.

It is found in the cytoplasm. The enzyme catalyses D-glyceraldehyde 3-phosphate = dihydroxyacetone phosphate. Its pathway is carbohydrate biosynthesis; gluconeogenesis. It functions in the pathway carbohydrate degradation; glycolysis; D-glyceraldehyde 3-phosphate from glycerone phosphate: step 1/1. Its function is as follows. Involved in the gluconeogenesis. Catalyzes stereospecifically the conversion of dihydroxyacetone phosphate (DHAP) to D-glyceraldehyde-3-phosphate (G3P). The protein is Triosephosphate isomerase of Prochlorococcus marinus (strain NATL2A).